The primary structure comprises 1212 residues: Periplasmic/secreted acid trehalase ATH1 (1212 aa).

Residues 1 to 82 (MGFKDKILFW…STRVKIRRQN (82 aa)) are Cytoplasmic-facing. A helical membrane pass occupies residues 83-103 (ILNTTLILGMLIALVIWTAIL). Residues 104 to 1212 (STNSYFSSSL…ATIREIVLQE (1109 aa)) are Periplasmic-facing. N-linked (GlcNAc...) asparagine glycosylation is found at asparagine 243, asparagine 275, asparagine 296, asparagine 362, asparagine 414, asparagine 428, and asparagine 521. Substrate is bound at residue 546–547 (WD). Asparagine 572, asparagine 601, asparagine 661, and asparagine 671 each carry an N-linked (GlcNAc...) asparagine glycan. The active-site Proton donor is glutamate 677. Asparagine 729 and asparagine 738 each carry an N-linked (GlcNAc...) asparagine glycan. 744 to 745 (KQ) is a binding site for substrate. N-linked (GlcNAc...) asparagine glycosylation is found at asparagine 912, asparagine 938, asparagine 993, asparagine 1011, asparagine 1033, asparagine 1052, asparagine 1070, asparagine 1097, and asparagine 1165.

The protein belongs to the glycosyl hydrolase 65 family. As to quaternary structure, homodimer.

Its subcellular location is the secreted. It localises to the periplasm. It is found in the membrane. It catalyses the reaction alpha,alpha-trehalose + H2O = alpha-D-glucose + beta-D-glucose. In terms of biological role, periplasmic/secreted acid trehalase that catalyzes hydrolysis of the disaccharide trehalose and required for growth on trehalose as carbon source. Growth on trehalose is not restricted to respiration. The chain is Periplasmic/secreted acid trehalase ATH1 from Candida glabrata (Yeast).